We begin with the raw amino-acid sequence, 61 residues long: Antimicrobial peptide 1 (61 aa).

The signal sequence occupies residues 1-24 (LPVAFLKFAIVLILFIAMSAMIEA). Position 25 is a pyrrolidone carboxylic acid (Gln25). Disulfide bonds link Cys26–Cys43, Cys33–Cys47, and Cys42–Cys58.

This sequence belongs to the AMP family. As to quaternary structure, homodimer. Three disulfide bonds are present. Found only in seeds.

The protein localises to the secreted. Its function is as follows. Possesses antifungal activity and is also active on two tested Gram-positive bacteria but is non-toxic for Gram-negative bacteria and cultured human cells. The sequence is that of Antimicrobial peptide 1 (AMP1) from Mirabilis jalapa (Garden four-o'clock).